The primary structure comprises 685 residues: RING finger protein 145 (685 aa).

13 consecutive transmembrane segments (helical) span residues 53 to 73, 77 to 97, 123 to 143, 151 to 171, 174 to 194, 225 to 245, 275 to 295, 316 to 336, 340 to 360, 384 to 404, 410 to 430, 460 to 480, and 482 to 502; these read YIALYLHYVGYILSLVLLTLP, LVQLYLYVLTALLLFAGHQLS, FTTALIGQVVVCTLCSCVMQT, AHLLPLVARLCLVPLETIVFI, FAMIFTGLEVLYFIASNLLVP, LVLPVLFMCFWLVLFALQIYT, YSLLGLVFTVSFVALGVLTLC, TEGITLLILAVQTGLIELQVI, FLLSIILFIVVASILQSMLEI, SLCLFLLVFPAYMAYMICQFF, LLIIISSSILTSLQVLGTLLI, LLEFLVAVCVVAYGVSETLFG, and WTVMGSTIILVHSYYNVWLRA. Residues 537–575 form an RING-type; atypical zinc finger; the sequence is CSICFQDMKSAVITPCSHFFHAACLKKWLYVQETCPLCH. A disordered region spans residues 582–685; that stretch reads LQPTSSPGTP…VSTSDVNCAS (104 aa). Residues 583–602 show a composition bias toward low complexity; the sequence is QPTSSPGTPTQGTPAANQNP. Basic and acidic residues predominate over residues 620–631; sequence EGIRAEEMKTSA.

The protein resides in the membrane. The protein is RING finger protein 145 (rnf145) of Danio rerio (Zebrafish).